Consider the following 922-residue polypeptide: Hexokinase-3 (922 aa).

Residues 1–23 form a disordered region; it reads MATIGPSGLHPGERASVCPHEGV. Hexokinase domains are found at residues 25–469 and 475–911; these read RPSG…MVTA and AAHR…LVTA. The hexokinase small subdomain 1 stretch occupies residues 82-218; the sequence is HGTEQGDFLV…TYRIDVVAMV (137 aa). 93–100 provides a ligand contact to ATP; that stretch reads ELGATGAS. 93 to 102 provides a ligand contact to D-glucose 6-phosphate; it reads ELGATGASLR. Residues serine 166, 183-184, and 219-220 each bind D-glucose; these read TK and ND. The segment at 219 to 458 is hexokinase large subdomain 1; the sequence is NDTVGTMMGC…CDVSFIPSVD (240 aa). Positions 220 and 243 each coordinate D-glucose 6-phosphate. D-glucose is bound by residues asparagine 246, glutamate 271, and 302–305; that span reads QRFE. Position 424–426 (424–426) interacts with D-glucose 6-phosphate; sequence GGR. ATP is bound by residues 436 to 437 and 540 to 545; these read RI and DLGGTN. Residues 529–660 form a hexokinase small subdomain 2 region; sequence DGSERGDFLA…AVELNVVAIV (132 aa). D-glucose 6-phosphate is bound at residue 540 to 544; the sequence is DLGGT. D-glucose-binding positions include 608–609, 625–626, and 661–662; these read SF, TK, and ND. The tract at residues 661 to 900 is hexokinase large subdomain 2; sequence NDTVGTMMSC…CTVTFLQSED (240 aa). Residues aspartate 662 and threonine 685 each coordinate D-glucose 6-phosphate. Position 685 (threonine 685) interacts with ATP. D-glucose-binding positions include 687–688, glutamate 713, and glutamate 747; that span reads TN. Residues 752–753, 789–793, and 868–872 each bind ATP; these read GM, TKFLS, and TLYKL. Residues 866 to 868 and serine 902 contribute to the D-glucose 6-phosphate site; that span reads DGT.

The protein belongs to the hexokinase family.

The catalysed reaction is a D-hexose + ATP = a D-hexose 6-phosphate + ADP + H(+). It carries out the reaction D-fructose + ATP = D-fructose 6-phosphate + ADP + H(+). It catalyses the reaction D-glucose + ATP = D-glucose 6-phosphate + ADP + H(+). It functions in the pathway carbohydrate metabolism; hexose metabolism. Its pathway is carbohydrate degradation; glycolysis; D-glyceraldehyde 3-phosphate and glycerone phosphate from D-glucose: step 1/4. Its activity is regulated as follows. Hexokinase is an allosteric enzyme inhibited by its product D-glucose 6-phosphate. Catalyzes the phosphorylation of hexose, such as D-glucose and D-fructose, to hexose 6-phosphate (D-glucose 6-phosphate and D-fructose 6-phosphate, respectively). Mediates the initial step of glycolysis by catalyzing phosphorylation of D-glucose to D-glucose 6-phosphate. The chain is Hexokinase-3 from Mus musculus (Mouse).